The primary structure comprises 544 residues: Methionine--tRNA ligase (544 aa).

The 'HIGH' region motif lies at Pro-10–His-20. Zn(2+) is bound by residues Cys-141, Cys-144, Cys-153, and Cys-156. The 'KMSKS' region signature appears at Lys-329 to Ser-333. Position 332 (Thr-332) interacts with ATP.

It belongs to the class-I aminoacyl-tRNA synthetase family. MetG type 1 subfamily. Monomer. Zn(2+) is required as a cofactor.

Its subcellular location is the cytoplasm. It carries out the reaction tRNA(Met) + L-methionine + ATP = L-methionyl-tRNA(Met) + AMP + diphosphate. Its function is as follows. Is required not only for elongation of protein synthesis but also for the initiation of all mRNA translation through initiator tRNA(fMet) aminoacylation. This chain is Methionine--tRNA ligase, found in Bacillus cereus (strain B4264).